We begin with the raw amino-acid sequence, 203 residues long: Urease accessory protein UreG (203 aa).

14–21 (GPVGAGKT) is a GTP binding site.

It belongs to the SIMIBI class G3E GTPase family. UreG subfamily. As to quaternary structure, homodimer. UreD, UreF and UreG form a complex that acts as a GTP-hydrolysis-dependent molecular chaperone, activating the urease apoprotein by helping to assemble the nickel containing metallocenter of UreC. The UreE protein probably delivers the nickel.

The protein localises to the cytoplasm. Functionally, facilitates the functional incorporation of the urease nickel metallocenter. This process requires GTP hydrolysis, probably effectuated by UreG. In Jannaschia sp. (strain CCS1), this protein is Urease accessory protein UreG.